We begin with the raw amino-acid sequence, 465 residues long: 23S rRNA (uracil(1939)-C(5))-methyltransferase RlmD (465 aa).

A disordered region spans residues Met1 to Ala22. Residues Pro16–Asp80 enclose the TRAM domain. Residues Cys93, Cys99, Cys102, and Cys181 each coordinate [4Fe-4S] cluster. S-adenosyl-L-methionine contacts are provided by Gln289, Phe318, Asn323, Glu339, Asn367, and Asp388. Catalysis depends on Cys421, which acts as the Nucleophile.

This sequence belongs to the class I-like SAM-binding methyltransferase superfamily. RNA M5U methyltransferase family. RlmD subfamily.

It carries out the reaction uridine(1939) in 23S rRNA + S-adenosyl-L-methionine = 5-methyluridine(1939) in 23S rRNA + S-adenosyl-L-homocysteine + H(+). Functionally, catalyzes the formation of 5-methyl-uridine at position 1939 (m5U1939) in 23S rRNA. This Burkholderia lata (strain ATCC 17760 / DSM 23089 / LMG 22485 / NCIMB 9086 / R18194 / 383) protein is 23S rRNA (uracil(1939)-C(5))-methyltransferase RlmD.